Reading from the N-terminus, the 407-residue chain is Phosphonoacetate hydrolase (407 aa).

Zn(2+) contacts are provided by D25, T64, D202, H206, D241, H242, and H368. Substrate contacts are provided by T64 and D202. Substrate is bound by residues H242 and H368.

Belongs to the alkaline phosphatase family. PhnA subfamily. As to quaternary structure, homodimer. Requires Zn(2+) as cofactor.

The enzyme catalyses phosphonoacetate + H2O = acetate + phosphate + H(+). Specifically hydrolyzes phosphonoacetate. Does not have activity on other organophosphonates or acetates. The chain is Phosphonoacetate hydrolase from Pseudomonas putida (Arthrobacter siderocapsulatus).